Reading from the N-terminus, the 139-residue chain is Peptide methionine sulfoxide reductase MsrB (139 aa).

In terms of domain architecture, MsrB spans 17-139 (EEQWRRELSP…NSAALKLEPK (123 aa)). Residues Cys56, Cys59, Cys105, and Cys108 each coordinate Zn(2+). The active-site Nucleophile is the Cys128.

Belongs to the MsrB Met sulfoxide reductase family. Zn(2+) serves as cofactor.

It catalyses the reaction L-methionyl-[protein] + [thioredoxin]-disulfide + H2O = L-methionyl-(R)-S-oxide-[protein] + [thioredoxin]-dithiol. The polypeptide is Peptide methionine sulfoxide reductase MsrB (Bradyrhizobium diazoefficiens (strain JCM 10833 / BCRC 13528 / IAM 13628 / NBRC 14792 / USDA 110)).